The following is a 127-amino-acid chain: Classical arabinogalactan protein 10 (127 aa).

The first 21 residues, 1–21, serve as a signal peptide directing secretion; it reads MASKSVVVLLFLALIASSAIA. Q22 is modified (pyrrolidone carboxylic acid). Positions 22-107 are disordered; sequence QAPGPAPTRS…TGSTPVDNNN (86 aa). A 4-hydroxyproline mark is found at P24, P26, P28, P32, and P36. Residues P24, P26, P28, P32, and P36 are each glycosylated (O-linked (Ara...) hydroxyproline). 3 stretches are compositionally biased toward pro residues: residues 25–39, 48–58, and 66–86; these read GPAP…PAQP, SITPTPTPTPS, and VSPP…PPTS. Polar residues predominate over residues 98 to 107; it reads TGSTPVDNNN. N107 carries GPI-anchor amidated asparagine lipidation. The propeptide at 108–127 is removed in mature form; the sequence is AATLAAGSLAGFVFVASLLL.

This sequence belongs to the classical AGP family. Post-translationally, O-glycosylated on hydroxyprolines; noncontiguous hydroxylproline residues are glycosylated with arabinogalactan. In terms of tissue distribution, predominantly expressed in flowers and at a lower level in roots and siliques.

The protein localises to the cell membrane. Proteoglycan that seems to be implicated in diverse developmental roles such as differentiation, cell-cell recognition, embryogenesis and programmed cell death. The chain is Classical arabinogalactan protein 10 (AGP10) from Arabidopsis thaliana (Mouse-ear cress).